The sequence spans 292 residues: ATP synthase gamma chain (292 aa).

Belongs to the ATPase gamma chain family. In terms of assembly, F-type ATPases have 2 components, CF(1) - the catalytic core - and CF(0) - the membrane proton channel. CF(1) has five subunits: alpha(3), beta(3), gamma(1), delta(1), epsilon(1). CF(0) has three main subunits: a, b and c.

Its subcellular location is the cell inner membrane. In terms of biological role, produces ATP from ADP in the presence of a proton gradient across the membrane. The gamma chain is believed to be important in regulating ATPase activity and the flow of protons through the CF(0) complex. The polypeptide is ATP synthase gamma chain (Chlorobaculum tepidum (strain ATCC 49652 / DSM 12025 / NBRC 103806 / TLS) (Chlorobium tepidum)).